Reading from the N-terminus, the 440-residue chain is Phosphatidylcholine-sterol acyltransferase (440 aa).

A signal peptide spans 1–24 (MGLPGSPWQWVLLLLGLLLPPATS). N-linked (GlcNAc...) asparagine glycosylation is present at Asn44. Cys74 and Cys98 are oxidised to a cystine. The N-linked (GlcNAc...) asparagine glycan is linked to Asn108. Ser205 serves as the catalytic Nucleophile. Asn296 is a glycosylation site (N-linked (GlcNAc...) asparagine). Cysteines 337 and 380 form a disulfide. Asp369 acts as the Charge relay system in catalysis. The N-linked (GlcNAc...) asparagine glycan is linked to Asn397. His401 acts as the Charge relay system in catalysis. Asn408 is a glycosylation site (N-linked (GlcNAc...) asparagine).

Belongs to the AB hydrolase superfamily. Lipase family. Detected in blood plasma (at protein level).

It localises to the secreted. It carries out the reaction a sterol + a 1,2-diacyl-sn-glycero-3-phosphocholine = a sterol ester + a 1-acyl-sn-glycero-3-phosphocholine. It catalyses the reaction a 1-O-alkyl-2-acetyl-sn-glycero-3-phosphocholine + H2O = a 1-O-alkyl-sn-glycero-3-phosphocholine + acetate + H(+). The catalysed reaction is 1-hexadecanoyl-2-(9Z,12Z-octadecadienoyl)-sn-glycero-3-phosphocholine + H2O = (9Z,12Z)-octadecadienoate + 1-hexadecanoyl-sn-glycero-3-phosphocholine + H(+). The enzyme catalyses 1-hexadecanoyl-2-(5Z,8Z,11Z,14Z-eicosatetraenoyl)-sn-glycero-3-phosphocholine + H2O = 1-hexadecanoyl-sn-glycero-3-phosphocholine + (5Z,8Z,11Z,14Z)-eicosatetraenoate + H(+). It carries out the reaction 1-hexadecanoyl-2-(5Z,8Z,11Z,14Z-eicosatetraenoyl)-sn-glycero-3-phosphocholine + cholesterol = cholesteryl (5Z,8Z,11Z,14Z)-eicosatetraenoate + 1-hexadecanoyl-sn-glycero-3-phosphocholine. It catalyses the reaction 1-hexadecanoyl-2-(9Z-octadecenoyl)-sn-glycero-3-phosphocholine + cholesterol = cholesteryl (9Z-octadecenoate) + 1-hexadecanoyl-sn-glycero-3-phosphocholine. The catalysed reaction is a 1-hexadecanoyl-2-acyl-sn-glycero-3-phosphocholine + (24S)-hydroxycholesterol = (24S)-24-hydroxycholesterol ester + 1-hexadecanoyl-sn-glycero-3-phosphocholine. The enzyme catalyses (24S)-hydroxycholesterol + 1-hexadecanoyl-2-(9Z,12Z-octadecadienoyl)-sn-glycero-3-phosphocholine = (24S)-hydroxycholesterol 3-linoleoate + 1-hexadecanoyl-sn-glycero-3-phosphocholine. It carries out the reaction 1-hexadecanoyl-2-(8Z,11Z,14Z-eicosatrienoyl)-sn-glycero-3-phosphocholine + cholesterol = cholesteryl (8Z,11Z,14Z)-eicosatrienoate + 1-hexadecanoyl-sn-glycero-3-phosphocholine. It catalyses the reaction 1-hexadecanoyl-2-(5Z,8Z,11Z-eicosatrienoyl)-sn-glycero-3-phosphocholine + cholesterol = cholesteryl (5Z,8Z,11Z)-eicosatrienoate + 1-hexadecanoyl-sn-glycero-3-phosphocholine. The catalysed reaction is 1-hexadecanoyl-2-(5Z,8Z,11Z,14Z,17Z-eicosapentaenoyl)-sn-glycero-3-phosphocholine + cholesterol = (5Z,8Z,11Z,14Z,17Z-eicosapentaenoyl)-cholesterol + 1-hexadecanoyl-sn-glycero-3-phosphocholine. The enzyme catalyses 1-hexadecanoyl-2-(9Z,12Z-octadecadienoyl)-sn-glycero-3-phosphocholine + cholesterol = cholesteryl (9Z,12Z)-octadecadienoate + 1-hexadecanoyl-sn-glycero-3-phosphocholine. It carries out the reaction 1-hexadecanoyl-2-(6Z,9Z,12Z-octadecatrienoyl)-sn-glycero-3-phosphocholine + cholesterol = (6Z,9Z,12Z-octadecatrienoyl)-cholesterol + 1-hexadecanoyl-sn-glycero-3-phosphocholine. It catalyses the reaction 1-hexadecanoyl-2-(11Z,14Z,17Z-eicosatrienoyl)-sn-glycero-3-phosphocholine + cholesterol = (11Z,14Z,17Z-eicosatrienoyl)-cholesterol + 1-hexadecanoyl-sn-glycero-3-phosphocholine. The catalysed reaction is 1-hexadecanoyl-2-(9Z,12Z,15Z-octadecatrienoyl)-sn-glycero-3-phosphocholine + cholesterol = (9Z,12Z,15Z-octadecatrienoyl)-cholesterol + 1-hexadecanoyl-sn-glycero-3-phosphocholine. The enzyme catalyses a 1-O-alkyl-2-acetyl-sn-glycero-3-phosphocholine + 1-hexadecanoyl-sn-glycero-3-phosphocholine = 1-hexadecanoyl-2-acetyl-sn-glycero-3-phosphocholine + a 1-O-alkyl-sn-glycero-3-phosphocholine. Functionally, central enzyme in the extracellular metabolism of plasma lipoproteins. Synthesized mainly in the liver and secreted into plasma where it converts cholesterol and phosphatidylcholines (lecithins) to cholesteryl esters and lysophosphatidylcholines on the surface of high and low density lipoproteins (HDLs and LDLs). The cholesterol ester is then transported back to the liver. Also produced in the brain by primary astrocytes, and esterifies free cholesterol on nascent APOE-containing lipoproteins secreted from glia and influences cerebral spinal fluid (CSF) APOE- and APOA1 levels. Together with APOE and the cholesterol transporter ABCA1, plays a key role in the maturation of glial-derived, nascent lipoproteins. Required for remodeling high-density lipoprotein particles into their spherical forms. Has a preference for plasma 16:0-18:2 or 18:O-18:2 phosphatidylcholines. Catalyzes the hydrolysis of 1-O-alkyl-2-acetyl-sn-glycero-3-phosphocholine (platelet-activating factor or PAF) to 1-O-alkyl-sn-glycero-3-phosphocholine (lyso-PAF). Also catalyzes the transfer of the acetate group from PAF to 1-hexadecanoyl-sn-glycero-3-phosphocholine forming lyso-PAF. Catalyzes the esterification of (24S)-hydroxycholesterol (24(S)OH-C), also known as cerebrosterol to produce 24(S)OH-C monoesters. This is Phosphatidylcholine-sterol acyltransferase (Lcat) from Rattus norvegicus (Rat).